Here is a 575-residue protein sequence, read N- to C-terminus: Glycine--tRNA ligase (575 aa).

Substrate is bound by residues Arg-96 and Glu-162. ATP-binding positions include 194-196, 204-209, 327-328, and 450-453; these read RNE, IRLREF, EC, and GIDR. Substrate is bound at residue 209–213; that stretch reads FTQAE. 446–450 is a binding site for substrate; it reads EPSYG.

Belongs to the class-II aminoacyl-tRNA synthetase family.

It is found in the cytoplasm. It catalyses the reaction tRNA(Gly) + glycine + ATP = glycyl-tRNA(Gly) + AMP + diphosphate. Functionally, catalyzes the attachment of glycine to tRNA(Gly). The sequence is that of Glycine--tRNA ligase from Methanococcus maripaludis (strain C5 / ATCC BAA-1333).